Here is a 135-residue protein sequence, read N- to C-terminus: Early E3 15.3 kDa protein (135 aa).

Belongs to the adenoviridae E3_15 family.

Protects virus-infected cells from TNF-induced cytolysis. The protein is Early E3 15.3 kDa protein of Human adenovirus B serotype 7 (HAdV-7).